We begin with the raw amino-acid sequence, 486 residues long: Malonate-semialdehyde dehydrogenase (486 aa).

Residues Phe154, Lys178, Glu181, Arg182, and Ser231 each coordinate NAD(+). Catalysis depends on Cys286, which acts as the Nucleophile. Residue Glu386 coordinates NAD(+).

Belongs to the aldehyde dehydrogenase family. IolA subfamily. Homotetramer.

The catalysed reaction is 3-oxopropanoate + NAD(+) + CoA + H2O = hydrogencarbonate + acetyl-CoA + NADH + H(+). It carries out the reaction 2-methyl-3-oxopropanoate + NAD(+) + CoA + H2O = propanoyl-CoA + hydrogencarbonate + NADH + H(+). It participates in polyol metabolism; myo-inositol degradation into acetyl-CoA; acetyl-CoA from myo-inositol: step 7/7. In terms of biological role, catalyzes the oxidation of malonate semialdehyde (MSA) and methylmalonate semialdehyde (MMSA) into acetyl-CoA and propanoyl-CoA, respectively. Is involved in a myo-inositol catabolic pathway. Bicarbonate, and not CO2, is the end-product of the enzymatic reaction. The sequence is that of Malonate-semialdehyde dehydrogenase from Bacillus cereus (strain B4264).